Reading from the N-terminus, the 562-residue chain is Formate--tetrahydrofolate ligase (562 aa).

Residue 70 to 77 (TPAGEGKS) coordinates ATP.

This sequence belongs to the formate--tetrahydrofolate ligase family.

It catalyses the reaction (6S)-5,6,7,8-tetrahydrofolate + formate + ATP = (6R)-10-formyltetrahydrofolate + ADP + phosphate. The protein operates within one-carbon metabolism; tetrahydrofolate interconversion. The chain is Formate--tetrahydrofolate ligase from Paenarthrobacter aurescens (strain TC1).